The following is a 187-amino-acid chain: Elongation factor P (187 aa).

The residue at position 34 (lysine 34) is an N6-(3,6-diaminohexanoyl)-5-hydroxylysine.

The protein belongs to the elongation factor P family. In terms of processing, may be beta-lysylated on the epsilon-amino group of Lys-34 by the combined action of EpmA and EpmB, and then hydroxylated on the C5 position of the same residue by EpmC (if this protein is present). Lysylation is critical for the stimulatory effect of EF-P on peptide-bond formation. The lysylation moiety may extend toward the peptidyltransferase center and stabilize the terminal 3-CCA end of the tRNA. Hydroxylation of the C5 position on Lys-34 may allow additional potential stabilizing hydrogen-bond interactions with the P-tRNA.

Its subcellular location is the cytoplasm. It participates in protein biosynthesis; polypeptide chain elongation. Its function is as follows. Involved in peptide bond synthesis. Alleviates ribosome stalling that occurs when 3 or more consecutive Pro residues or the sequence PPG is present in a protein, possibly by augmenting the peptidyl transferase activity of the ribosome. Modification of Lys-34 is required for alleviation. In Vesicomyosocius okutanii subsp. Calyptogena okutanii (strain HA), this protein is Elongation factor P.